Here is a 408-residue protein sequence, read N- to C-terminus: Ribulose bisphosphate carboxylase/oxygenase activase, chloroplastic (408 aa).

Residues 1 to 32 (MQVTMKSSAVSGQRVGGARVATRSVRRAQLQV) constitute a chloroplast transit peptide. 138–145 (GGKGQGKT) serves as a coordination point for ATP.

The protein belongs to the RuBisCO activase family. Monomer.

Its subcellular location is the plastid. The protein resides in the chloroplast stroma. Activation of RuBisCO (ribulose-1,5-bisphosphate carboxylase/oxygenase; EC 4.1.1.39) involves the ATP-dependent carboxylation of the epsilon-amino group of lysine leading to a carbamate structure. The sequence is that of Ribulose bisphosphate carboxylase/oxygenase activase, chloroplastic from Chlamydomonas reinhardtii (Chlamydomonas smithii).